The sequence spans 298 residues: GTP cyclohydrolase FolE2 (298 aa).

Belongs to the GTP cyclohydrolase IV family.

The enzyme catalyses GTP + H2O = 7,8-dihydroneopterin 3'-triphosphate + formate + H(+). It participates in cofactor biosynthesis; 7,8-dihydroneopterin triphosphate biosynthesis; 7,8-dihydroneopterin triphosphate from GTP: step 1/1. Its function is as follows. Converts GTP to 7,8-dihydroneopterin triphosphate. The sequence is that of GTP cyclohydrolase FolE2 from Neisseria meningitidis serogroup B (strain ATCC BAA-335 / MC58).